Here is a 70-residue protein sequence, read N- to C-terminus: Large ribosomal subunit protein eL38 (70 aa).

Residue lysine 4 forms a Glycyl lysine isopeptide (Lys-Gly) (interchain with G-Cter in SUMO2) linkage. Position 9 is an N6-acetyllysine; alternate (lysine 9). Lysine 9 participates in a covalent cross-link: Glycyl lysine isopeptide (Lys-Gly) (interchain with G-Cter in SUMO2); alternate. The residue at position 67 (lysine 67) is an N6-acetyllysine.

It belongs to the eukaryotic ribosomal protein eL38 family. In terms of assembly, component of the large ribosomal subunit.

It localises to the cytoplasm. Component of the large ribosomal subunit. The ribosome is a large ribonucleoprotein complex responsible for the synthesis of proteins in the cell. The polypeptide is Large ribosomal subunit protein eL38 (Rpl38) (Mus musculus (Mouse)).